The chain runs to 390 residues: Transforming growth factor beta-1 proprotein (390 aa).

Positions 1–29 (MPPSRLRLLPLLLPLLWLLVLAPGRPASG) are cleaved as a signal peptide. The segment at 30–74 (LSTCKTIDMELVKRKRIEAIRGQILSKLRLASPPSQGDVPPGPLP) is straightjacket domain. The arm domain stretch occupies residues 75–271 (EAVLALYNST…ATPLERAQHL (197 aa)). Asparagine 82, asparagine 136, and asparagine 176 each carry an N-linked (GlcNAc...) asparagine glycan. The bowtie tail stretch occupies residues 226 to 252 (DSKDNTLRVEINGIGPKRRGDLAAIHG). Residues 244 to 246 (RGD) carry the Cell attachment site motif. Intrachain disulfides connect cysteine 285-cysteine 294, cysteine 293-cysteine 356, cysteine 322-cysteine 387, and cysteine 326-cysteine 389.

This sequence belongs to the TGF-beta family. In terms of assembly, homodimer; disulfide-linked. Interacts with the serine proteases, HTRA1 and HTRA3: the interaction with either inhibits TGFB1-mediated signaling and the HTRA protease activity is required for this inhibition. May interact with THSD4; this interaction may lead to sequestration by FBN1 microfibril assembly and attenuation of TGFB signaling. Interacts with CD109, DPT and ASPN. Interacts with EFEMP2. Interacts with TSKU; the interaction contributes to regulation of the hair cycle. Interacts with TGFBR3. As to quaternary structure, homodimer; disulfide-linked. Interacts with transforming growth factor beta-1 (TGF-beta-1) chain; interaction is non-covalent and maintains TGF-beta-1 in a latent state; each latency-associated peptide (LAP) monomer interacts with TGF-beta-1 in the other monomer. Interacts with LTBP1; leading to regulation of TGF-beta-1 activation. Interacts with LRRC32/GARP; leading to regulation of TGF-beta-1 activation on the surface of activated regulatory T-cells (Tregs). Interacts with LRRC33/NRROS; leading to regulation of TGF-beta-1 in macrophages and microglia. Interacts (via cell attachment site) with integrins ITGAV and ITGB6 (ITGAV:ITGB6), leading to release of the active TGF-beta-1. Interacts with NREP; the interaction results in a decrease in TGFB1 autoinduction. Interacts with HSP90AB1; inhibits latent TGFB1 activation. Homodimer; disulfide-linked. Interacts with TGF-beta receptors (TGFBR1 and TGFBR2), leading to signal transduction. Post-translationally, transforming growth factor beta-1 proprotein: The precursor proprotein is cleaved in the Golgi apparatus by FURIN to form Transforming growth factor beta-1 (TGF-beta-1) and Latency-associated peptide (LAP) chains, which remain non-covalently linked, rendering TGF-beta-1 inactive. N-glycosylated. Deglycosylation leads to activation of Transforming growth factor beta-1 (TGF-beta-1); mechanisms triggering deglycosylation-driven activation of TGF-beta-1 are however unclear.

Its subcellular location is the secreted. The protein resides in the extracellular space. It localises to the extracellular matrix. Functionally, transforming growth factor beta-1 proprotein: Precursor of the Latency-associated peptide (LAP) and Transforming growth factor beta-1 (TGF-beta-1) chains, which constitute the regulatory and active subunit of TGF-beta-1, respectively. In terms of biological role, required to maintain the Transforming growth factor beta-1 (TGF-beta-1) chain in a latent state during storage in extracellular matrix. Associates non-covalently with TGF-beta-1 and regulates its activation via interaction with 'milieu molecules', such as LTBP1, LRRC32/GARP and LRRC33/NRROS, that control activation of TGF-beta-1. Interaction with LRRC33/NRROS regulates activation of TGF-beta-1 in macrophages and microglia. Interaction with LRRC32/GARP controls activation of TGF-beta-1 on the surface of activated regulatory T-cells (Tregs). Interaction with integrins (ITGAV:ITGB6 or ITGAV:ITGB8) results in distortion of the Latency-associated peptide chain and subsequent release of the active TGF-beta-1. Multifunctional protein that regulates the growth and differentiation of various cell types and is involved in various processes, such as normal development, immune function, microglia function and responses to neurodegeneration. Activation into mature form follows different steps: following cleavage of the proprotein in the Golgi apparatus, Latency-associated peptide (LAP) and Transforming growth factor beta-1 (TGF-beta-1) chains remain non-covalently linked rendering TGF-beta-1 inactive during storage in extracellular matrix. At the same time, LAP chain interacts with 'milieu molecules', such as LTBP1, LRRC32/GARP and LRRC33/NRROS that control activation of TGF-beta-1 and maintain it in a latent state during storage in extracellular milieus. TGF-beta-1 is released from LAP by integrins (ITGAV:ITGB6 or ITGAV:ITGB8): integrin-binding to LAP stabilizes an alternative conformation of the LAP bowtie tail and results in distortion of the LAP chain and subsequent release of the active TGF-beta-1. Once activated following release of LAP, TGF-beta-1 acts by binding to TGF-beta receptors (TGFBR1 and TGFBR2), which transduce signal. While expressed by many cells types, TGF-beta-1 only has a very localized range of action within cell environment thanks to fine regulation of its activation by Latency-associated peptide chain (LAP) and 'milieu molecules'. Plays an important role in bone remodeling: acts as a potent stimulator of osteoblastic bone formation, causing chemotaxis, proliferation and differentiation in committed osteoblasts. Can promote either T-helper 17 cells (Th17) or regulatory T-cells (Treg) lineage differentiation in a concentration-dependent manner. At high concentrations, leads to FOXP3-mediated suppression of RORC and down-regulation of IL-17 expression, favoring Treg cell development. At low concentrations in concert with IL-6 and IL-21, leads to expression of the IL-17 and IL-23 receptors, favoring differentiation to Th17 cells. Stimulates sustained production of collagen through the activation of CREB3L1 by regulated intramembrane proteolysis (RIP). Mediates SMAD2/3 activation by inducing its phosphorylation and subsequent translocation to the nucleus. Positively regulates odontoblastic differentiation in dental papilla cells, via promotion of IPO7-mediated translocation of phosphorylated SMAD2 to the nucleus and subsequent transcription of target genes. Can induce epithelial-to-mesenchymal transition (EMT) and cell migration in various cell types. The protein is Transforming growth factor beta-1 proprotein (TGFB1) of Cavia porcellus (Guinea pig).